Reading from the N-terminus, the 310-residue chain is Nucleotide-binding protein MAP_1147 (310 aa).

30–37 (GLSGAGRG) is a binding site for ATP. GTP is bound at residue 81-84 (DVRS).

It belongs to the RapZ-like family.

In terms of biological role, displays ATPase and GTPase activities. The polypeptide is Nucleotide-binding protein MAP_1147 (Mycolicibacterium paratuberculosis (strain ATCC BAA-968 / K-10) (Mycobacterium paratuberculosis)).